Consider the following 306-residue polypeptide: Diterpene cyclase eriG (306 aa).

Helical transmembrane passes span 13–33 (IFFG…SIFA) and 43–63 (ATLV…IYFF). Asn-64 carries N-linked (GlcNAc...) asparagine glycosylation. Helical transmembrane passes span 115–135 (FLPE…TSYG), 161–181 (IAPA…WAGL), 213–233 (LIIT…AGIF), and 265–285 (MFYT…GLGL).

It belongs to the UbiA prenyltransferase family. Requires Mg(2+) as cofactor.

It localises to the membrane. It carries out the reaction (2E,6E,10E)-geranylgeranyl diphosphate = (-)-cyatha-3,12-diene + diphosphate. It participates in secondary metabolite biosynthesis. Its activity is regulated as follows. EDTA completely blocks the reaction. In terms of biological role, diterpene cyclase; part of the gene cluster that mediates the biosynthesis of erinacines, cyathane-xylosides that show unique biological activities, including leishmanicidal activity, stimulating activity for nerve growth-factor synthesis, and agonistic activity toward the kappa opioid receptor. Within the pathway, eriG acts as a diterpene cyclase that converts geranylgeranyl diphosphate (GGPP) into cyatha-3,12-diene. EriG is unable to use geranyl diphosphate (GPP) or farnesyl diphosphate (FPP) as substrates. The first step of the erinacines biosynthesis pathway is catalyzed by the geranylgeranyl diphosphate (GGPP) synthase eriE via conversion of farnesyl pyrophosphate and isopentyl pyrophosphate into geranylgeranyl pyrophosphate (GGPP). GGPP is then substrate of the diterpene cyclase eriG for the production of cyatha-3,12-diene. The cytochrome P450 monooxygenase eriI then hydroxylates cyatha-3,12-diene at C-14 of the seven-membered ring to produce erinacol, which is further hydroxylated at C-15 by the cytochrome P450 monooxygenase eriC to yield cyathadiol. The cytochrome P450 monooxygenase eriA then catalyzes C-11 hydroxylation in the presence of the short chain dehydrogenase/reductase (SDR) eriH, which leads to the production of cyathatriol. The acetyltransferase eriL converts cyathatriol into 11-O-acetyl-cyathatriol. The SDR eriH catalyzes further oxidation of 11-O-acetyl-cyathatriol into 1-O-acetylcyathin A3. Finally, the glycosyl transferase eriJ tranfers xylose from UDP-xylose onto C-14 of 11-O-acetyl-cyathatriol to form eracine Q. EriJ is also able to convert 11-O-acetyl-cyathatriol to eracine Q2 by using UDP-D-glucose as cosubstrate, but at a lower rate. This chain is Diterpene cyclase eriG, found in Hericium erinaceus (Lion's mane mushroom).